Consider the following 403-residue polypeptide: Chaperone protein DnaJ (403 aa).

One can recognise a J domain in the interval 4–69; the sequence is DYYEILGVAR…DKRRRYDQFG (66 aa). Residues 159 to 240 form a CR-type zinc finger; it reads GVEKTIKIKK…CYGEGIKQGE (82 aa). Residues Cys172, Cys175, Cys188, Cys191, Cys214, Cys217, Cys228, and Cys231 each contribute to the Zn(2+) site. CXXCXGXG motif repeat units lie at residues 172–179, 188–195, 214–221, and 228–235; these read CRECNGTG, CPTCHGSG, CPTCGGEG, and CPSCYGEG.

The protein belongs to the DnaJ family. As to quaternary structure, homodimer. It depends on Zn(2+) as a cofactor.

Its subcellular location is the cytoplasm. Functionally, participates actively in the response to hyperosmotic and heat shock by preventing the aggregation of stress-denatured proteins and by disaggregating proteins, also in an autonomous, DnaK-independent fashion. Unfolded proteins bind initially to DnaJ; upon interaction with the DnaJ-bound protein, DnaK hydrolyzes its bound ATP, resulting in the formation of a stable complex. GrpE releases ADP from DnaK; ATP binding to DnaK triggers the release of the substrate protein, thus completing the reaction cycle. Several rounds of ATP-dependent interactions between DnaJ, DnaK and GrpE are required for fully efficient folding. Also involved, together with DnaK and GrpE, in the DNA replication of plasmids through activation of initiation proteins. This is Chaperone protein DnaJ from Chlorobaculum tepidum (strain ATCC 49652 / DSM 12025 / NBRC 103806 / TLS) (Chlorobium tepidum).